A 234-amino-acid polypeptide reads, in one-letter code: Uridylate kinase (234 aa).

10–11 (GS) contributes to the ATP binding site. Gly-44 provides a ligand contact to UMP. ATP is bound by residues Gly-45 and Arg-49. Residues Asp-66 and 114 to 120 (ITPGQTT) contribute to the UMP site. ATP contacts are provided by Thr-140, Tyr-146, and Asp-149.

Belongs to the UMP kinase family. As to quaternary structure, homohexamer.

The protein localises to the cytoplasm. The catalysed reaction is UMP + ATP = UDP + ADP. Its pathway is pyrimidine metabolism; CTP biosynthesis via de novo pathway; UDP from UMP (UMPK route): step 1/1. Inhibited by UTP. Catalyzes the reversible phosphorylation of UMP to UDP. In Methanoregula boonei (strain DSM 21154 / JCM 14090 / 6A8), this protein is Uridylate kinase.